The sequence spans 552 residues: Arginine--tRNA ligase (552 aa).

Residues 124-134 carry the 'HIGH' region motif; it reads GNPTGPLHLAH.

The protein belongs to the class-I aminoacyl-tRNA synthetase family. As to quaternary structure, monomer.

The protein resides in the cytoplasm. It carries out the reaction tRNA(Arg) + L-arginine + ATP = L-arginyl-tRNA(Arg) + AMP + diphosphate. The polypeptide is Arginine--tRNA ligase (Tropheryma whipplei (strain Twist) (Whipple's bacillus)).